The chain runs to 171 residues: Phosphopantetheine adenylyltransferase (171 aa).

Substrate is bound at residue Thr-10. ATP-binding positions include 10–11 (TF) and His-18. Residues Lys-42, Thr-74, and Arg-88 each coordinate substrate. Residues 89–91 (GLR), Glu-99, and 124–130 (WACLSSK) each bind ATP.

This sequence belongs to the bacterial CoaD family. In terms of assembly, homohexamer. It depends on Mg(2+) as a cofactor.

It is found in the cytoplasm. It catalyses the reaction (R)-4'-phosphopantetheine + ATP + H(+) = 3'-dephospho-CoA + diphosphate. It participates in cofactor biosynthesis; coenzyme A biosynthesis; CoA from (R)-pantothenate: step 4/5. Its function is as follows. Reversibly transfers an adenylyl group from ATP to 4'-phosphopantetheine, yielding dephospho-CoA (dPCoA) and pyrophosphate. The chain is Phosphopantetheine adenylyltransferase from Blochmanniella pennsylvanica (strain BPEN).